Here is a 552-residue protein sequence, read N- to C-terminus: DnaJ homolog subfamily C member 1 (552 aa).

The N-terminal stretch at 1 to 43 (MWVPGFGSARLPQRRRSGLESSSVRPLWLLLLFLLAAVRPVRA) is a signal peptide. The Lumenal segment spans residues 44 to 149 (WESGDLELFD…RRVRKMSNAE (106 aa)). Residues 56–129 (EEVQLNFYEF…RYDDVLINGL (74 aa)) enclose the J domain. Residues 150–170 (LALLLFIILTVGHYAVVWSIY) traverse the membrane as a helical segment. Over 171-552 (LEKQLDELLG…LVQKKKQAKS (382 aa)) the chain is Cytoplasmic. In terms of domain architecture, SANT 1 spans 323 to 377 (RQAPEWTEEDLSQLTRSMVKFPGGTPGRWDKIAHELGRSVTDVTTKAKELKDSVT). The tract at residues 370-495 (KELKDSVTSS…ERTRAAEEAW (126 aa)) is disordered. A Phosphoserine modification is found at serine 379. Over residues 419-431 (MEDEEHEAAEGEQ) the composition is skewed to acidic residues. The segment covering 453–470 (TRVEPEEKLRGKRQKDFD) has biased composition (basic and acidic residues). Phosphoserine occurs at positions 477 and 478. The span at 480–492 (EEKQRKERTRAAE) shows a compositional bias: basic and acidic residues. The SANT 2 domain occupies 490–545 (AAEEAWTQSQQKLLELALQQYPKGASDRWDKIAKCVPSKSKEDCIARYKLLVELVQ).

As to quaternary structure, interacts (via J domain) with HSPA5. Interacts (via cytosolic domain) with ribosomes. Interacts (via SANT 2 domain) with SERPINA3; the interaction delays the formation of the covalent inhibitory complex SERPINA3-chymotrypsin, but does not alter the catalytic activity of SERPINA3. Interacts (via SANT 2 domain) with ITIH4 (via C-terminus); the interaction protects ITIH4 against in vitro cleavage by kallikrein. Widely expressed.

The protein localises to the endoplasmic reticulum membrane. Its subcellular location is the nucleus membrane. The protein resides in the microsome membrane. Its function is as follows. May modulate protein synthesis. The sequence is that of DnaJ homolog subfamily C member 1 (Dnajc1) from Mus musculus (Mouse).